The sequence spans 288 residues: Energy-coupling factor transporter ATP-binding protein EcfA2 (288 aa).

In terms of domain architecture, ABC transporter spans 3–246 (IKLEQLGYCY…PDELVDLGLS (244 aa)). 40-47 (GHTGSGKS) contacts ATP.

It belongs to the ABC transporter superfamily. Energy-coupling factor EcfA family. In terms of assembly, forms a stable energy-coupling factor (ECF) transporter complex composed of 2 membrane-embedded substrate-binding proteins (S component), 2 ATP-binding proteins (A component) and 2 transmembrane proteins (T component).

Its subcellular location is the cell membrane. ATP-binding (A) component of a common energy-coupling factor (ECF) ABC-transporter complex. Unlike classic ABC transporters this ECF transporter provides the energy necessary to transport a number of different substrates. In Listeria monocytogenes serotype 4b (strain F2365), this protein is Energy-coupling factor transporter ATP-binding protein EcfA2.